The following is a 189-amino-acid chain: Calcyphosin (189 aa).

EF-hand domains are found at residues 21-56, 57-92, 93-128, and 136-172; these read LGIQ…LGLV, LDTA…PMSQ, AREA…RTHP, and TEEE…VSAS. Positions 34, 36, 38, 40, 45, 70, 72, 74, 76, 81, 106, 108, 110, and 117 each coordinate Ca(2+). At Ser-40 the chain carries Phosphoserine; by PKA.

In terms of assembly, monomer. Does not form oligomers in the presence of calcium. In terms of processing, phosphorylated in response to thyrotropin and cAMP. As to expression, detected in thyroid, salivary gland, lung, brain and cerebellum (at protein level).

It localises to the cytoplasm. Calcium-binding protein. May play a role in cellular signaling events (Potential). This chain is Calcyphosin (CAPS), found in Canis lupus familiaris (Dog).